Consider the following 170-residue polypeptide: Adenine phosphoribosyltransferase (170 aa).

This sequence belongs to the purine/pyrimidine phosphoribosyltransferase family. As to quaternary structure, homodimer.

Its subcellular location is the cytoplasm. It catalyses the reaction AMP + diphosphate = 5-phospho-alpha-D-ribose 1-diphosphate + adenine. It participates in purine metabolism; AMP biosynthesis via salvage pathway; AMP from adenine: step 1/1. Its function is as follows. Catalyzes a salvage reaction resulting in the formation of AMP, that is energically less costly than de novo synthesis. The sequence is that of Adenine phosphoribosyltransferase from Mycoplasmopsis pulmonis (strain UAB CTIP) (Mycoplasma pulmonis).